We begin with the raw amino-acid sequence, 220 residues long: Probable L-serine dehydratase, beta chain (220 aa).

An ACT domain is found at 148 to 220 (AILVVHNDKF…NIIQVTKIAD (73 aa)).

It belongs to the iron-sulfur dependent L-serine dehydratase family. Heterodimer of an alpha chain and a beta chain. It depends on [4Fe-4S] cluster as a cofactor.

The catalysed reaction is L-serine = pyruvate + NH4(+). It participates in carbohydrate biosynthesis; gluconeogenesis. The chain is Probable L-serine dehydratase, beta chain (sdaAB) from Bacillus subtilis (strain 168).